Consider the following 424-residue polypeptide: CinA-like protein (424 aa).

Belongs to the CinA family.

This Prochlorococcus marinus (strain MIT 9312) protein is CinA-like protein.